The following is a 428-amino-acid chain: U2 small nuclear ribonucleoprotein auxiliary factor 35 kDa subunit-related protein 2-like (428 aa).

The interval 1 to 51 is disordered; that stretch reads MASRQTAIPEKLSRKQYKAAMKKEKRKKRRQKMARLRALEAPPEEDDDVSA. Residues 23–35 show a composition bias toward basic residues; it reads KEKRKKRRQKMAR. The segment covering 42–51 has biased composition (acidic residues); the sequence is PPEEDDDVSA. A Phosphoserine modification is found at Ser-50. The C3H1-type 1 zinc finger occupies 157 to 185; sequence EKYRPSCPFYNKTGACRFGNRCSRKHDFP. In terms of domain architecture, RRM spans 189-295; the sequence is PTLLVKSMFT…RQLQCEFCPV (107 aa). Residues 297–324 form a C3H1-type 2 zinc finger; that stretch reads RWKVAICGLFEMQKCPKGKHCNFLHVFR. The disordered stretch occupies residues 339–428; the sequence is MSPPAWTGSS…PGPQSQSHRT (90 aa). At Ser-340 the chain carries Phosphoserine. Over residues 351–366 the composition is skewed to basic and acidic residues; it reads NSDRRERKDHHEEYYS. The span at 367-377 shows a compositional bias: low complexity; that stretch reads KSRSYHSGSYH. Ser-375 carries the phosphoserine modification. Residues 389–410 show a composition bias toward basic residues; the sequence is SPHRWKKSHKQTTKSHERHSSR. Polar residues predominate over residues 419–428; it reads PGPQSQSHRT.

In terms of assembly, interacts with SF3B1. Interacts with ZCRB1. Highest expression levels are detected in the brain, and lower expression levels in other tissues like epididymis, testis, bone marrow or muscle. In testis, expressed in both Sertoli and spermatogenic cell.

Its subcellular location is the nucleus. In terms of biological role, plays a role in splicing of the U12-type introns. Implicated also in removal of U2 introns positioned adjacent to a U12 intron. This is U2 small nuclear ribonucleoprotein auxiliary factor 35 kDa subunit-related protein 2-like from Mus musculus (Mouse).